Consider the following 156-residue polypeptide: Small ribosomal subunit protein uS7 (156 aa).

The protein belongs to the universal ribosomal protein uS7 family. As to quaternary structure, part of the 30S ribosomal subunit. Contacts proteins S9 and S11.

In terms of biological role, one of the primary rRNA binding proteins, it binds directly to 16S rRNA where it nucleates assembly of the head domain of the 30S subunit. Is located at the subunit interface close to the decoding center, probably blocks exit of the E-site tRNA. The chain is Small ribosomal subunit protein uS7 from Mannheimia succiniciproducens (strain KCTC 0769BP / MBEL55E).